A 492-amino-acid chain; its full sequence is Beta-Ala-His dipeptidase (492 aa).

His-107 serves as a coordination point for Zn(2+). Residue Asp-109 is part of the active site. Asp-140 is a Zn(2+) binding site. Glu-174 functions as the Proton acceptor in the catalytic mechanism. Position 175 (Glu-175) interacts with Zn(2+). At Ser-194 the chain carries Phosphoserine. Residues Asp-203 and His-453 each contribute to the Zn(2+) site.

This sequence belongs to the peptidase M20A family. As to quaternary structure, homodimer. Zn(2+) serves as cofactor. Detected exclusively in kidney.

It is found in the secreted. It catalyses the reaction Preferential hydrolysis of the beta-Ala-|-His dipeptide (carnosine), and also anserine, Xaa-|-His dipeptides and other dipeptides including homocarnosine.. The catalysed reaction is carnosine + H2O = beta-alanine + L-histidine. The enzyme catalyses anserine + H2O = N(pros)-methyl-L-histidine + beta-alanine. It carries out the reaction L-alanyl-L-histidine + H2O = L-histidine + L-alanine. It catalyses the reaction glycyl-L-histidine + H2O = L-histidine + glycine. The catalysed reaction is L-homocarnosine + H2O = 4-aminobutanoate + L-histidine. Catalyzes the peptide bond hydrolysis in Xaa-His dipeptides, displaying the highest activity toward carnosine (beta-alanyl-L-histidine) and anserine (beta-alanyl-3-methyl-histidine). The sequence is that of Beta-Ala-His dipeptidase (Cndp1) from Mus musculus (Mouse).